A 199-amino-acid chain; its full sequence is V-type ATP synthase subunit E (199 aa).

Belongs to the V-ATPase E subunit family.

Functionally, produces ATP from ADP in the presence of a proton gradient across the membrane. The protein is V-type ATP synthase subunit E (atpE) of Borreliella burgdorferi (strain ATCC 35210 / DSM 4680 / CIP 102532 / B31) (Borrelia burgdorferi).